We begin with the raw amino-acid sequence, 341 residues long: Uroporphyrinogen decarboxylase (341 aa).

Substrate-binding positions include 25-29 (RQAGR), Phe-44, Asp-74, Tyr-151, Ser-206, and His-318.

Belongs to the uroporphyrinogen decarboxylase family. As to quaternary structure, homodimer.

The protein localises to the cytoplasm. It catalyses the reaction uroporphyrinogen III + 4 H(+) = coproporphyrinogen III + 4 CO2. It functions in the pathway porphyrin-containing compound metabolism; protoporphyrin-IX biosynthesis; coproporphyrinogen-III from 5-aminolevulinate: step 4/4. Its function is as follows. Catalyzes the decarboxylation of four acetate groups of uroporphyrinogen-III to yield coproporphyrinogen-III. The chain is Uroporphyrinogen decarboxylase from Christiangramia forsetii (strain DSM 17595 / CGMCC 1.15422 / KT0803) (Gramella forsetii).